Consider the following 316-residue polypeptide: Methionyl-tRNA formyltransferase (316 aa).

Position 108 to 111 (108 to 111 (SLLP)) interacts with (6S)-5,6,7,8-tetrahydrofolate.

The protein belongs to the Fmt family.

The enzyme catalyses L-methionyl-tRNA(fMet) + (6R)-10-formyltetrahydrofolate = N-formyl-L-methionyl-tRNA(fMet) + (6S)-5,6,7,8-tetrahydrofolate + H(+). Functionally, attaches a formyl group to the free amino group of methionyl-tRNA(fMet). The formyl group appears to play a dual role in the initiator identity of N-formylmethionyl-tRNA by promoting its recognition by IF2 and preventing the misappropriation of this tRNA by the elongation apparatus. The protein is Methionyl-tRNA formyltransferase of Heliobacterium modesticaldum (strain ATCC 51547 / Ice1).